We begin with the raw amino-acid sequence, 206 residues long: Cytidylate kinase (206 aa).

9–17 (GPAAAGKGT) is an ATP binding site. Residues 155 to 168 (LRERDRRDREREAA) are compositionally biased toward basic and acidic residues. Residues 155-174 (LRERDRRDREREAAPLRPAP) form a disordered region.

Belongs to the cytidylate kinase family. Type 1 subfamily.

It localises to the cytoplasm. It catalyses the reaction CMP + ATP = CDP + ADP. The enzyme catalyses dCMP + ATP = dCDP + ADP. In Cereibacter sphaeroides (strain KD131 / KCTC 12085) (Rhodobacter sphaeroides), this protein is Cytidylate kinase.